The following is a 103-amino-acid chain: uncharacterized protein (103 aa).

This is an uncharacterized protein from Methanocaldococcus jannaschii (strain ATCC 43067 / DSM 2661 / JAL-1 / JCM 10045 / NBRC 100440) (Methanococcus jannaschii).